Consider the following 956-residue polypeptide: Plasma membrane ATPase 3 (956 aa).

Topologically, residues 1–65 (MGEKPEVLDA…EKKESKFSKF (65 aa)) are cytoplasmic. Residues 66 to 85 (LGFMWNPLSWVMEAAAIMAI) traverse the membrane as a helical segment. At 86 to 97 (ALANGGGKPPDW) the chain is on the extracellular side. Residues 98-118 (QDFVGIITLLIINSTISFIEE) traverse the membrane as a helical segment. Residues 119–247 (NNAGNAAAAL…GHFQKVLTAI (129 aa)) are Cytoplasmic-facing. Residues 248 to 268 (GNFCICSIAVGMIIEIIVMYP) form a helical membrane-spanning segment. Residues 269–278 (IQHRKYRPGI) lie on the Extracellular side of the membrane. Residues 279-300 (DNLLVLLIGGIPIAMPTVLSVT) traverse the membrane as a helical segment. Over 301-647 (MAIGSHRLAQ…TSRAIFQRMK (347 aa)) the chain is Cytoplasmic. Catalysis depends on D333, which acts as the 4-aspartylphosphate intermediate. D592 and D596 together coordinate Mg(2+). A helical membrane pass occupies residues 648 to 669 (NYTIYAVSITIRIVLGFMLLAL). Topologically, residues 670-674 (IWQFD) are extracellular. The chain crosses the membrane as a helical span at residues 675–697 (FPPFMVLIIAILNDGTIMTISKD). The Cytoplasmic segment spans residues 698–713 (RVKPSPLPDSWKLAEI). The helical transmembrane segment at 714–734 (FTTGVVLGGYLAMMTVIFFWA) threads the bilayer. Residues 735-759 (AYKTNFFPRVFGVSTLEKTATDDFR) lie on the Extracellular side of the membrane. A helical membrane pass occupies residues 760–780 (KLASAIYLQVSTISQALIFVT). Over 781 to 792 (RSRSWSFMERPG) the chain is Cytoplasmic. A helical membrane pass occupies residues 793–813 (LLLVVAFFIAQLVATLIAVYA). Residues 814–822 (NWSFAAIEG) lie on the Extracellular side of the membrane. Residues 823–843 (IGWGWAGVIWLYNIVFYIPLD) traverse the membrane as a helical segment. Topologically, residues 844 to 956 (LXXFLIRYAL…IETIQQAYTV (113 aa)) are cytoplasmic.

This sequence belongs to the cation transport ATPase (P-type) (TC 3.A.3) family. Type IIIA subfamily. Expressed in roots, stems, leaves from both vegetative and flowering plants, and flowers at early and late stages of development with highest expression levels found in flowers and root tissue.

Its subcellular location is the cell membrane. It catalyses the reaction ATP + H2O + H(+)(in) = ADP + phosphate + 2 H(+)(out). Functionally, the plasma membrane ATPase of plants and fungi is a hydrogen ion pump. The proton gradient it generates drives the active transport of nutrients by H(+)-symport. The resulting external acidification and/or internal alkinization may mediate growth responses. This is Plasma membrane ATPase 3 (PMA3) from Nicotiana plumbaginifolia (Leadwort-leaved tobacco).